The primary structure comprises 216 residues: Ribosomal RNA large subunit methyltransferase E (216 aa).

S-adenosyl-L-methionine contacts are provided by glycine 60, tryptophan 62, aspartate 80, aspartate 96, and aspartate 121. Lysine 161 functions as the Proton acceptor in the catalytic mechanism.

This sequence belongs to the class I-like SAM-binding methyltransferase superfamily. RNA methyltransferase RlmE family.

It is found in the cytoplasm. It carries out the reaction uridine(2552) in 23S rRNA + S-adenosyl-L-methionine = 2'-O-methyluridine(2552) in 23S rRNA + S-adenosyl-L-homocysteine + H(+). Specifically methylates the uridine in position 2552 of 23S rRNA at the 2'-O position of the ribose in the fully assembled 50S ribosomal subunit. This Pseudomonas savastanoi pv. phaseolicola (strain 1448A / Race 6) (Pseudomonas syringae pv. phaseolicola (strain 1448A / Race 6)) protein is Ribosomal RNA large subunit methyltransferase E.